Here is a 174-residue protein sequence, read N- to C-terminus: Crossover junction endodeoxyribonuclease RuvC (174 aa).

Active-site residues include Asp-16, Glu-76, and Asp-148. The Mg(2+) site is built by Asp-16, Glu-76, and Asp-148.

Belongs to the RuvC family. As to quaternary structure, homodimer which binds Holliday junction (HJ) DNA. The HJ becomes 2-fold symmetrical on binding to RuvC with unstacked arms; it has a different conformation from HJ DNA in complex with RuvA. In the full resolvosome a probable DNA-RuvA(4)-RuvB(12)-RuvC(2) complex forms which resolves the HJ. Requires Mg(2+) as cofactor.

It is found in the cytoplasm. It carries out the reaction Endonucleolytic cleavage at a junction such as a reciprocal single-stranded crossover between two homologous DNA duplexes (Holliday junction).. Functionally, the RuvA-RuvB-RuvC complex processes Holliday junction (HJ) DNA during genetic recombination and DNA repair. Endonuclease that resolves HJ intermediates. Cleaves cruciform DNA by making single-stranded nicks across the HJ at symmetrical positions within the homologous arms, yielding a 5'-phosphate and a 3'-hydroxyl group; requires a central core of homology in the junction. The consensus cleavage sequence is 5'-(A/T)TT(C/G)-3'. Cleavage occurs on the 3'-side of the TT dinucleotide at the point of strand exchange. HJ branch migration catalyzed by RuvA-RuvB allows RuvC to scan DNA until it finds its consensus sequence, where it cleaves and resolves the cruciform DNA. This is Crossover junction endodeoxyribonuclease RuvC from Rhodopseudomonas palustris (strain ATCC BAA-98 / CGA009).